The chain runs to 364 residues: Mannose-1-phosphate guanyltransferase (364 aa).

The protein belongs to the transferase hexapeptide repeat family.

It is found in the cytoplasm. It catalyses the reaction alpha-D-mannose 1-phosphate + GTP + H(+) = GDP-alpha-D-mannose + diphosphate. It participates in nucleotide-sugar biosynthesis; GDP-alpha-D-mannose biosynthesis; GDP-alpha-D-mannose from alpha-D-mannose 1-phosphate (GTP route): step 1/1. In terms of biological role, involved in cell wall synthesis where it is required for glycosylation. Involved in cell cycle progression through cell-size checkpoint. The polypeptide is Mannose-1-phosphate guanyltransferase (MPG1) (Cryptococcus neoformans var. neoformans serotype D (strain B-3501A) (Filobasidiella neoformans)).